Here is a 37-residue protein sequence, read N- to C-terminus: Large ribosomal subunit protein bL36c (37 aa).

The protein belongs to the bacterial ribosomal protein bL36 family.

It localises to the plastid. Its subcellular location is the chloroplast. This is Large ribosomal subunit protein bL36c from Vitis vinifera (Grape).